Here is a 153-residue protein sequence, read N- to C-terminus: Putative nuclear shuttle protein (153 aa).

The protein belongs to the nanoviridae nuclear shuttle protein family.

It localises to the host nucleus. It is found in the host cytoplasm. In terms of biological role, putative nuclear shuttle protein. The sequence is that of Putative nuclear shuttle protein (DNA-N) from Faba bean necrotic yellows virus (isolate Syrian SV292-88) (FBNYV).